A 248-amino-acid chain; its full sequence is CKLF-like MARVEL transmembrane domain-containing protein 2 (248 aa).

Residues 1-63 (MAPKAAKGAK…KAVQPKHEVG (63 aa)) form a disordered region. Over residues 12 to 22 (EPAPAPPPPGA) the composition is skewed to pro residues. A compositionally biased stretch (basic and acidic residues) spans 23 to 63 (KPEEDKKDGKEPSDKPQKAVQDHKEPSDKPQKAVQPKHEVG). Positions 82–204 (FWLLGHAEIK…DVCLQRNHFR (123 aa)) constitute an MARVEL domain. Transmembrane regions (helical) follow at residues 116–136 (LIITMEISFFSFFILLYSFAI), 147–167 (ISDLFNDLIACAFLVGAVVFA), and 178–198 (YLLAVILIGAAGVFAFIDVCL). Positions 208 to 248 (AKKHMLVPPPGKEKGPQQGKGPEPAKPPEPGKPPGPAKGKK) are disordered. Residues 231-248 (PAKPPEPGKPPGPAKGKK) show a composition bias toward pro residues.

Belongs to the chemokine-like factor family. As to expression, highly expressed in testis.

It localises to the membrane. The protein is CKLF-like MARVEL transmembrane domain-containing protein 2 (CMTM2) of Homo sapiens (Human).